A 603-amino-acid chain; its full sequence is Rab proteins geranylgeranyltransferase component A (603 aa).

Ser470 carries the phosphoserine modification.

The protein belongs to the Rab GDI family.

In terms of biological role, substrate-binding subunit (component A) of the Rab geranylgeranyltransferase (GGTase) complex. Binds unprenylated Rab proteins and presents the substrate peptide to the catalytic component B. The component A is thought to be regenerated by transferring its prenylated Rab back to the donor membrane. This is Rab proteins geranylgeranyltransferase component A (MRS6) from Saccharomyces cerevisiae (strain ATCC 204508 / S288c) (Baker's yeast).